The primary structure comprises 757 residues: Polyribonucleotide nucleotidyltransferase (757 aa).

Positions 482 and 488 each coordinate Mg(2+). The KH domain occupies 549–608; the sequence is PRMLSFYIDKDKISAAIGSKGKNIRSVCERSNAKIEIGDDGKVSVFATSGTEAEIAKSMM. Residues 618–686 enclose the S1 motif domain; the sequence is GSIVDVKVVR…KGGCPKLSRR (69 aa). The segment covering 703-714 has biased composition (basic and acidic residues); it reads EERKDGPNDRDN. The disordered stretch occupies residues 703-757; that stretch reads EERKDGPNDRDNYYNNSFSRKPGGSHHKRPPRPRSGFSNRNRPKFGNNDSSSGFY. The segment covering 725–734 has biased composition (basic residues); the sequence is GGSHHKRPPR.

The protein belongs to the polyribonucleotide nucleotidyltransferase family. Mg(2+) serves as cofactor.

It localises to the cytoplasm. The enzyme catalyses RNA(n+1) + phosphate = RNA(n) + a ribonucleoside 5'-diphosphate. In terms of biological role, involved in mRNA degradation. Catalyzes the phosphorolysis of single-stranded polyribonucleotides processively in the 3'- to 5'-direction. The protein is Polyribonucleotide nucleotidyltransferase of Wolbachia sp. subsp. Drosophila simulans (strain wRi).